The chain runs to 146 residues: 3-dehydroquinate dehydratase (146 aa).

Y22 functions as the Proton acceptor in the catalytic mechanism. Substrate-binding residues include N73, H79, and D86. The active-site Proton donor is the H99. Substrate is bound by residues 100-101 and R110; that span reads LS.

It belongs to the type-II 3-dehydroquinase family. As to quaternary structure, homododecamer.

It carries out the reaction 3-dehydroquinate = 3-dehydroshikimate + H2O. It functions in the pathway metabolic intermediate biosynthesis; chorismate biosynthesis; chorismate from D-erythrose 4-phosphate and phosphoenolpyruvate: step 3/7. Catalyzes a trans-dehydration via an enolate intermediate. This is 3-dehydroquinate dehydratase from Synechococcus sp. (strain CC9902).